We begin with the raw amino-acid sequence, 200 residues long: 3-isopropylmalate dehydratase small subunit (200 aa).

It belongs to the LeuD family. LeuD type 1 subfamily. In terms of assembly, heterodimer of LeuC and LeuD.

It catalyses the reaction (2R,3S)-3-isopropylmalate = (2S)-2-isopropylmalate. It functions in the pathway amino-acid biosynthesis; L-leucine biosynthesis; L-leucine from 3-methyl-2-oxobutanoate: step 2/4. Its function is as follows. Catalyzes the isomerization between 2-isopropylmalate and 3-isopropylmalate, via the formation of 2-isopropylmaleate. In Arthrobacter sp. (strain FB24), this protein is 3-isopropylmalate dehydratase small subunit.